An 896-amino-acid chain; its full sequence is Desmocollin-3 (896 aa).

Residues 1 to 31 (MVVPEFRSPQCRALCTKLLLTLWVFSFVGEA) form the signal peptide. The propeptide occupies 32–135 (CKKVTFHVPS…KETVLRRSKR (104 aa)). Cadherin domains lie at 136–243 (RWAP…YPLF), 244–355 (TEAI…APTF), 356–472 (RQNT…GPEC), 473–580 (KPPE…EIIQ), and 581–691 (DYIV…TLGK). Residues 136 to 695 (RWAPIPCSMQ…GITLGKWAIL (560 aa)) lie on the Extracellular side of the membrane. N-linked (GlcNAc...) asparagine glycosylation is present at Asn166. 2 N-linked (GlcNAc...) asparagine glycosylation sites follow: Asn392 and Asn547. Asn630 is a glycosylation site (N-linked (GlcNAc...) (high mannose) asparagine). The chain crosses the membrane as a helical span at residues 696–716 (AILLGIALLFSVLLTLVCGVV). The Cytoplasmic portion of the chain corresponds to 717-896 (TARKGKHFPE…LTLAETCTKR (180 aa)).

May form homodimers. Interacts with DSG1; there is evidence to suggest that the interaction promotes cell-cell adhesion of keratinocytes. As to expression, expressed in the basal layers of epidermal stratified epithelia from birth (at protein level).

The protein localises to the cell membrane. It is found in the cell junction. It localises to the desmosome. Its subcellular location is the cytoplasm. Its function is as follows. A component of desmosome cell-cell junctions which are required for positive regulation of cellular adhesion. Required for cell-cell adhesion in the epidermis, as a result required for the maintenance of the dermal cohesion and the dermal barrier function. Required for cell-cell adhesion of epithelial cell layers surrounding the telogen hair club, as a result plays an important role in telogen hair shaft anchorage. Essential for successful completion of embryo compaction and development beyond the 8-cell stage. This Mus musculus (Mouse) protein is Desmocollin-3 (Dsc3).